A 113-amino-acid polypeptide reads, in one-letter code: ATP synthase epsilon chain (113 aa).

This sequence belongs to the ATPase epsilon chain family. In terms of assembly, F-type ATPases have 2 components, CF(1) - the catalytic core - and CF(0) - the membrane proton channel. CF(1) has five subunits: alpha(3), beta(3), gamma(1), delta(1), epsilon(1). CF(0) has three main subunits: a, b and c.

The protein localises to the cell membrane. In terms of biological role, produces ATP from ADP in the presence of a proton gradient across the membrane. The sequence is that of ATP synthase epsilon chain from Wolbachia pipientis subsp. Culex pipiens (strain wPip).